Here is a 193-residue protein sequence, read N- to C-terminus: NADH-quinone oxidoreductase subunit B (193 aa).

[4Fe-4S] cluster contacts are provided by cysteine 49, cysteine 50, cysteine 115, and cysteine 144. The interval 172 to 193 is disordered; that stretch reads FKKEEPREANAPVPVNTEMPLE.

The protein belongs to the complex I 20 kDa subunit family. As to quaternary structure, NDH-1 is composed of 14 different subunits. Subunits NuoB, C, D, E, F, and G constitute the peripheral sector of the complex. Requires [4Fe-4S] cluster as cofactor.

It is found in the cell inner membrane. The enzyme catalyses a quinone + NADH + 5 H(+)(in) = a quinol + NAD(+) + 4 H(+)(out). Its function is as follows. NDH-1 shuttles electrons from NADH, via FMN and iron-sulfur (Fe-S) centers, to quinones in the respiratory chain. The immediate electron acceptor for the enzyme in this species is believed to be ubiquinone. Couples the redox reaction to proton translocation (for every two electrons transferred, four hydrogen ions are translocated across the cytoplasmic membrane), and thus conserves the redox energy in a proton gradient. The sequence is that of NADH-quinone oxidoreductase subunit B from Akkermansia muciniphila (strain ATCC BAA-835 / DSM 22959 / JCM 33894 / BCRC 81048 / CCUG 64013 / CIP 107961 / Muc).